The primary structure comprises 199 residues: Interleukin-11 (199 aa).

An N-terminal signal peptide occupies residues 1 to 21; sequence MNCVCRLVLVVLSLWPDRVVA. The segment at 182-190 is important for interaction with IL11RA and for the stimulation of cell proliferation; that stretch reads HLTLDWAVR.

It belongs to the IL-6 superfamily. As to quaternary structure, interacts with either IL11RA1 or IL11RA2 to associate with IL6ST, giving rise to a multimeric signaling complex.

It localises to the secreted. Its function is as follows. Cytokine that stimulates the proliferation of hematopoietic stem cells and megakaryocyte progenitor cells and induces megakaryocyte maturation resulting in increased platelet production. Also promotes the proliferation of hepatocytes in response to liver damage. Binding to its receptor formed by IL6ST and either IL11RA1 or IL11RA2 activates a signaling cascade that promotes cell proliferation, also in the context of various cancers. Signaling leads to the activation of intracellular protein kinases and the phosphorylation of STAT3. The interaction with the membrane-bound IL11RA and IL6ST stimulates 'classic signaling', whereas the binding of IL11 and soluble IL11RA to IL6ST stimulates 'trans-signaling'. In Mus musculus (Mouse), this protein is Interleukin-11.